Here is a 595-residue protein sequence, read N- to C-terminus: Putative lipase atg15 (595 aa).

Residues 1-20 are Cytoplasmic-facing; the sequence is MKGLRGHNKKSFWGNTRLSD. The chain crosses the membrane as a helical; Signal-anchor for type II membrane protein span at residues 21–41; it reads LLWPVTLLPGLISAYQPVYLG. The Lumenal portion of the chain corresponds to 42–595; that stretch reads SRQSSPFLPP…TTTGKHLGRF (554 aa). 5 N-linked (GlcNAc...) asparagine glycosylation sites follow: Asn164, Asn199, Asn221, Asn279, and Asn303. The active-site Charge relay system is the Ser319. Asn465 carries N-linked (GlcNAc...) asparagine glycosylation.

The protein belongs to the AB hydrolase superfamily. Lipase family. As to quaternary structure, binds to both phosphatidylinositol (PI) and phosphatidylinositol 3,5-bisphosphate (PIP2).

It localises to the endosome. The protein localises to the multivesicular body membrane. The protein resides in the prevacuolar compartment membrane. The catalysed reaction is a triacylglycerol + H2O = a diacylglycerol + a fatty acid + H(+). Functionally, lipase which is essential for lysis of subvacuolar cytoplasm to vacuole targeted bodies and intravacuolar autophagic bodies. Involved in the lysis of intravacuolar multivesicular body (MVB) vesicles. The intravacuolar membrane disintegration by atg15 is critical to life span extension. This chain is Putative lipase atg15 (atg15), found in Aspergillus niger (strain ATCC MYA-4892 / CBS 513.88 / FGSC A1513).